The following is a 51-amino-acid chain: Ribosome biogenesis protein Nop10 (51 aa).

Belongs to the NOP10 family.

Its function is as follows. Involved in ribosome biogenesis; more specifically in 18S rRNA pseudouridylation and in cleavage of pre-rRNA. The chain is Ribosome biogenesis protein Nop10 from Methanococcus aeolicus (strain ATCC BAA-1280 / DSM 17508 / OCM 812 / Nankai-3).